Consider the following 89-residue polypeptide: Small ribosomal subunit protein uS15 (89 aa).

Belongs to the universal ribosomal protein uS15 family. In terms of assembly, part of the 30S ribosomal subunit. Forms a bridge to the 50S subunit in the 70S ribosome, contacting the 23S rRNA.

One of the primary rRNA binding proteins, it binds directly to 16S rRNA where it helps nucleate assembly of the platform of the 30S subunit by binding and bridging several RNA helices of the 16S rRNA. Its function is as follows. Forms an intersubunit bridge (bridge B4) with the 23S rRNA of the 50S subunit in the ribosome. This chain is Small ribosomal subunit protein uS15, found in Yersinia pseudotuberculosis serotype O:1b (strain IP 31758).